Consider the following 162-residue polypeptide: NADH-quinone oxidoreductase subunit I (162 aa).

4Fe-4S ferredoxin-type domains lie at 53 to 83 and 93 to 122; these read LRRYANGEERCIACKLCEAVCPALAITIEAE and TRYDIDMTKCIYCGLCEEACPVDAIVEGPN. Residues Cys63, Cys66, Cys69, Cys73, Cys102, Cys105, Cys108, and Cys112 each coordinate [4Fe-4S] cluster.

Belongs to the complex I 23 kDa subunit family. In terms of assembly, NDH-1 is composed of 14 different subunits. Subunits NuoA, H, J, K, L, M, N constitute the membrane sector of the complex. It depends on [4Fe-4S] cluster as a cofactor.

The protein localises to the cell inner membrane. It catalyses the reaction a quinone + NADH + 5 H(+)(in) = a quinol + NAD(+) + 4 H(+)(out). NDH-1 shuttles electrons from NADH, via FMN and iron-sulfur (Fe-S) centers, to quinones in the respiratory chain. The immediate electron acceptor for the enzyme in this species is believed to be ubiquinone. Couples the redox reaction to proton translocation (for every two electrons transferred, four hydrogen ions are translocated across the cytoplasmic membrane), and thus conserves the redox energy in a proton gradient. In Granulibacter bethesdensis (strain ATCC BAA-1260 / CGDNIH1), this protein is NADH-quinone oxidoreductase subunit I.